The sequence spans 155 residues: Aspartate carbamoyltransferase regulatory chain (155 aa).

Zn(2+) contacts are provided by cysteine 109, cysteine 114, cysteine 138, and cysteine 141.

It belongs to the PyrI family. Contains catalytic and regulatory chains. The cofactor is Zn(2+).

In terms of biological role, involved in allosteric regulation of aspartate carbamoyltransferase. This is Aspartate carbamoyltransferase regulatory chain from Vibrio cholerae serotype O1 (strain ATCC 39315 / El Tor Inaba N16961).